The chain runs to 413 residues: Exodeoxyribonuclease 7 large subunit (413 aa).

Belongs to the XseA family. In terms of assembly, heterooligomer composed of large and small subunits.

It is found in the cytoplasm. The catalysed reaction is Exonucleolytic cleavage in either 5'- to 3'- or 3'- to 5'-direction to yield nucleoside 5'-phosphates.. Functionally, bidirectionally degrades single-stranded DNA into large acid-insoluble oligonucleotides, which are then degraded further into small acid-soluble oligonucleotides. This Corynebacterium efficiens (strain DSM 44549 / YS-314 / AJ 12310 / JCM 11189 / NBRC 100395) protein is Exodeoxyribonuclease 7 large subunit.